We begin with the raw amino-acid sequence, 255 residues long: MLIILAPSKKQTYPNCPNLVSTCPEFLQEAGQLNQILRAKTEKEIALLMKTSKILTENTLRDIRAFNGSEGRGFPAIFTFKGDAYDGIKAEDWNQEQMFYAQQHLRILSGLYGILRPLDLMQKHRLEMGLKLATHSGTQMYQFWGEKITDTINRQLDKGERCLINLSSTEYSRVIQKKKLDGRMIDIIFRQIKDGRARTIPIYAKRARGAMANFMVQEKIRDSEKLKNFSSEGYRFLPGESSEDSWVFSCTLNKK.

The protein belongs to the UPF0246 family.

The polypeptide is UPF0246 protein DP0358 (Desulfotalea psychrophila (strain LSv54 / DSM 12343)).